Consider the following 135-residue polypeptide: MNKFSLFFALTATLMTITESAVPTASISAHVLDISGGSPAGGVQILAYIQQNDDWTKIGSEFTQDNGRVDWVSPDFTLIPGTYRLVYITEPYYKAKNVESFYPYVEVVFNIRDATQHYHVPLTLSPWGYSTYRGS.

An N-terminal signal peptide occupies residues 1–20; the sequence is MNKFSLFFALTATLMTITES. Substrate-binding residues include His-30, Arg-68, and Tyr-132.

It belongs to the transthyretin family. 5-hydroxyisourate hydrolase subfamily. As to quaternary structure, homotetramer.

The enzyme catalyses 5-hydroxyisourate + H2O = 5-hydroxy-2-oxo-4-ureido-2,5-dihydro-1H-imidazole-5-carboxylate + H(+). Functionally, catalyzes the hydrolysis of 5-hydroxyisourate (HIU) to 2-oxo-4-hydroxy-4-carboxy-5-ureidoimidazoline (OHCU). The sequence is that of Probable 5-hydroxyisourate hydrolase R09H10.3 from Caenorhabditis elegans.